Reading from the N-terminus, the 1580-residue chain is Adhesion G protein-coupled receptor L3 (1580 aa).

The N-terminal stretch at M1 to G19 is a signal peptide. The Extracellular portion of the chain corresponds to G20–T949. A disordered region spans residues S23–A81. The SUEL-type lectin domain occupies S103–V192. Cystine bridges form between C104–C134, C113–C191, C146–C178, C159–C165, and C203–C385. N-linked (GlcNAc...) asparagine glycosylation occurs at N161. An Olfactomedin-like domain is found at L202 to P461. An interaction with FLRT3 region spans residues Y317–E347. 4 residues coordinate Ca(2+): D332, N380, A381, and V435. The tract at residues E494–P540 is disordered. Positions S496–R521 are enriched in low complexity. Residues S522–S539 show a composition bias toward polar residues. N-linked (GlcNAc...) asparagine glycans are attached at residues N532, N617, N827, N840, N885, and N911. The 180-residue stretch at D756 to K935 folds into the GAIN-B domain. 2 disulfide bridges follow: C886/C917 and C905/C919. The tract at residues C886 to K935 is GPS. The segment at T923–A939 is stachel. The helical transmembrane segment at W950 to F970 threads the bilayer. At R971–N978 the chain is on the cytoplasmic side. Residues T979–I999 traverse the membrane as a helical segment. N1000 is a glycosylation site (N-linked (GlcNAc...) asparagine). The Extracellular portion of the chain corresponds to N1000 to A1007. Residues C1008 to L1028 form a helical membrane-spanning segment. At E1029 to Y1050 the chain is on the cytoplasmic side. Residues F1051–Y1071 form a helical membrane-spanning segment. At R1072–F1088 the chain is on the extracellular side. A helical membrane pass occupies residues I1089–I1109. Residues A1110–S1142 are Cytoplasmic-facing. The chain crosses the membrane as a helical span at residues W1143–M1163. Topologically, residues Y1164–T1169 are extracellular. Residue N1166 is glycosylated (N-linked (GlcNAc...) asparagine). A helical membrane pass occupies residues V1170–F1190. The Cytoplasmic portion of the chain corresponds to H1191–L1580. The disordered stretch occupies residues G1213–S1238. S1254 carries the post-translational modification Phosphoserine. Residues F1555–L1580 form a disordered region. The PDZ-binding signature appears at H1575–L1580.

This sequence belongs to the G-protein coupled receptor 2 family. LN-TM7 subfamily. In terms of assembly, heterodimer of 2 chains generated by proteolytic processing; the large extracellular N-terminal fragment and the membrane-bound C-terminal fragment predominantly remain associated and non-covalently linked. Interacts (via olfactomedin-like domain) with FLRT1 (via extracellular domain). Interacts (via olfactomedin-like domain) with FLRT2 (via extracellular domain). Interacts (via olfactomedin-like domain) with FLRT3 (via extracellular domain); the interaction is direct. Interacts (via extracellular domain) with TENM1. Interacts (via extracellular domain) with TENM2. Interacts (via extracellular domain) with TENM3. Identified in a complex with FLRT3 and UNC5B; does not interact with UNC5B by itself. Identified in a complex with FLRT3 and UNC5D; does not interact with UNC5D by itself. Interacts (via PDZ-binding motif) with SHANK3. Interacts (via PDZ-binding motif) with DLG4. Autoproteolytically processed at the GPS region of the GAIN-B domain; this cleavage modulates receptor activity. Brain-specific distribution but low levels are also detected in lung and spleen.

It is found in the cell membrane. Its subcellular location is the postsynaptic cell membrane. The protein resides in the cell projection. The protein localises to the axon. It localises to the cell junction. Forms a heterodimer of 2 chains generated by proteolytic processing that remain associated through non-covalent interactions mediated by the GAIN-B domain. In the inactivated receptor, the Stachel sequence (also named stalk) is embedded in the GAIN-B domain, where it adopts a beta-strand conformation. On activation, the Stachel moves into the 7 transmembrane region and adopts a twisted hook-shaped configuration that forms contacts within the receptor, leading to coupling of a G-alpha protein, which activates signaling. The cleaved GAIN-B and N-terminal domains can then dissociate from the rest of the receptor. In terms of biological role, orphan adhesion G-protein coupled receptor (aGPCR), which mediates synapse specificity. Ligand binding causes a conformation change that triggers signaling via guanine nucleotide-binding proteins (G proteins) and modulates the activity of downstream effectors. ADGRL3 is coupled with different classes of G alpha proteins, such as G(12)/G(13), G(s), G(i) or G(q), depending on the context. Coupling to G(12)/G(13) G proteins, which mediates the activation Rho small GTPases is the most efficient. Following G-protein coupled receptor activation, associates with cell adhesion molecules that are expressed at the surface of adjacent cells to direct synapse specificity. Specifically mediates the establishment of Schaffer-collateral synapses formed by CA3-region axons on CA1-region pyramidal neurons in the hippocampus. Localizes to postsynaptic spines in excitatory synapses in the S.oriens and S.radiatum and interacts with presynaptic cell adhesion molecules FLRT3 and TENM2, promoting synapse formation. Plays a role in the development of glutamatergic synapses in the cortex. Important in determining the connectivity rates between the principal neurons in the cortex. Orphan adhesion G-protein coupled receptor (aGPCR), which mediates synapse specificity. Ligand binding causes a conformation change that triggers signaling via guanine nucleotide-binding proteins (G proteins) and modulates the activity of downstream effectors, such as adenylate cyclase. Isoform 1 is specifically coupled to G(s) G proteins and mediates activation of adenylate cyclase activity. Following G-protein coupled receptor activation, undergoes liquid-liquid phase transition, associates with (1) cell adhesion molecules that are expressed at the surface of adjacent cells, as well as (2) PDZ-containing proteins, such as SHANK3 and DLG4, in the cytoplasm to direct synapse formation. The protein is Adhesion G protein-coupled receptor L3 of Bos taurus (Bovine).